We begin with the raw amino-acid sequence, 273 residues long: 4-hydroxy-tetrahydrodipicolinate reductase (273 aa).

NAD(+) contacts are provided by residues 12 to 17 and E38; that span reads GAGGRM. Residue R39 participates in NADP(+) binding. NAD(+) contacts are provided by residues 102–104 and 126–129; these read GTT and AANF. H159 functions as the Proton donor/acceptor in the catalytic mechanism. H160 is a binding site for (S)-2,3,4,5-tetrahydrodipicolinate. Catalysis depends on K163, which acts as the Proton donor. 169–170 is a binding site for (S)-2,3,4,5-tetrahydrodipicolinate; it reads GT.

This sequence belongs to the DapB family. Homotetramer.

It is found in the cytoplasm. It catalyses the reaction (S)-2,3,4,5-tetrahydrodipicolinate + NAD(+) + H2O = (2S,4S)-4-hydroxy-2,3,4,5-tetrahydrodipicolinate + NADH + H(+). The enzyme catalyses (S)-2,3,4,5-tetrahydrodipicolinate + NADP(+) + H2O = (2S,4S)-4-hydroxy-2,3,4,5-tetrahydrodipicolinate + NADPH + H(+). The protein operates within amino-acid biosynthesis; L-lysine biosynthesis via DAP pathway; (S)-tetrahydrodipicolinate from L-aspartate: step 4/4. Functionally, catalyzes the conversion of 4-hydroxy-tetrahydrodipicolinate (HTPA) to tetrahydrodipicolinate. The polypeptide is 4-hydroxy-tetrahydrodipicolinate reductase (Klebsiella pneumoniae subsp. pneumoniae (strain ATCC 700721 / MGH 78578)).